The sequence spans 339 residues: Undifferentiated embryonic cell transcription factor 1 (339 aa).

Disordered stretches follow at residues Met1–Pro62 and Met144–Pro270. A phosphoserine mark is found at Ser15, Ser18, Ser48, and Ser54. Residues Arg154–Arg170 show a composition bias toward basic residues. 2 stretches are compositionally biased toward low complexity: residues Ser171 to Ala193 and Thr218 to Leu229. Positions Gly261–Pro270 are enriched in polar residues. The interval Gln279–Gly310 is leucine-zipper.

Binds to the N-terminal region of ATF2. Associates with the TFIID complex through interaction with TBP. Phosphorylated. Expressed mainly in pluripotent cells with expression rapidly down-regulated upon cell differentiation.

Its subcellular location is the nucleus. Acts as a transcriptional coactivator of ATF2. The polypeptide is Undifferentiated embryonic cell transcription factor 1 (Mus musculus (Mouse)).